The following is a 1259-amino-acid chain: Zinc finger protein BRUTUS-like At1g74770 (1259 aa).

A helical membrane pass occupies residues 441–461; sequence LLYTSIHVLPLGLLKCVILWF. 2 stretches are compositionally biased toward basic and acidic residues: residues 904 to 916 and 924 to 934; these read KEEK…ESKK and EGDKEQTDKMS. Residues 904–938 form a disordered region; sequence KEEKDLERSESKKICRGSNQEGDKEQTDKMSQKVS. The CHY-type zinc finger occupies 1018-1087; sequence PHSLIFGCNH…ANCSNTSCKS (70 aa). 24 residues coordinate Zn(2+): C1025, H1027, C1038, C1039, C1045, C1048, H1049, H1055, C1067, C1070, C1080, C1085, C1094, C1097, H1108, C1109, C1112, C1115, H1127, C1128, C1131, C1134, H1142, and C1144. A CTCHY-type zinc finger spans residues 1089 to 1152; it reads MGKYFCKICK…VCREKCLEDN (64 aa). An RING-type; atypical zinc finger spans residues 1153-1195; the sequence is CPICHEYIFTSSSPVKALPCGHLMHSTCFQEYTCSHYTCPVCS.

Binds zinc and iron ions.

Its subcellular location is the membrane. It is found in the nucleus. It participates in protein modification; protein ubiquitination. Probable E3 ubiquitin-protein ligase that may regulate the response to iron deficiency and thus contributes to iron homeostasis. This is Zinc finger protein BRUTUS-like At1g74770 from Arabidopsis thaliana (Mouse-ear cress).